Consider the following 1408-residue polypeptide: DNA-directed RNA polymerase subunit beta' (1408 aa).

Zn(2+)-binding residues include C70, C72, C85, and C88. Mg(2+) contacts are provided by D460, D462, and D464. Residues C814, C888, C895, and C898 each coordinate Zn(2+).

Belongs to the RNA polymerase beta' chain family. In terms of assembly, the RNAP catalytic core consists of 2 alpha, 1 beta, 1 beta' and 1 omega subunit. When a sigma factor is associated with the core the holoenzyme is formed, which can initiate transcription. Requires Mg(2+) as cofactor. The cofactor is Zn(2+).

It catalyses the reaction RNA(n) + a ribonucleoside 5'-triphosphate = RNA(n+1) + diphosphate. DNA-dependent RNA polymerase catalyzes the transcription of DNA into RNA using the four ribonucleoside triphosphates as substrates. The sequence is that of DNA-directed RNA polymerase subunit beta' from Shewanella frigidimarina (strain NCIMB 400).